The chain runs to 216 residues: Probable csgAB operon transcriptional regulatory protein (216 aa).

The HTH luxR-type domain occupies 149–214 (NSTESALLTH…QAVSWANDNL (66 aa)). The segment at residues 173–192 (NNEIARSLFISENTVKTHLY) is a DNA-binding region (H-T-H motif).

In terms of biological role, the master regulator for adhesive curli fimbriae expression; necessary for transcription of the csgAB operon. Plays a positive role in biofilm formation. This is Probable csgAB operon transcriptional regulatory protein from Salmonella typhimurium (strain LT2 / SGSC1412 / ATCC 700720).